Consider the following 208-residue polypeptide: CASP-like protein 4A4 (208 aa).

Over 1-53 (MKELKDHVVVITYGPSSEASVTASPVSQQTPSLFAYSVTPSASRFSSRRASVH) the chain is Cytoplasmic. The helical transmembrane segment at 54-74 (VIGLVLRFITMVLCFVSALSL) threads the bilayer. The Extracellular portion of the chain corresponds to 75–92 (AVNVQRPSKRHLTQNSSS). An N-linked (GlcNAc...) asparagine glycan is attached at N89. A helical transmembrane segment spans residues 93–113 (FASYPELLYCFGVAVIGFVYT). The Cytoplasmic portion of the chain corresponds to 114–141 (SLQTFKGVCDITHRGVLISEPLSDYISF). Residues 142-162 (IFDQVICYLLVSSSSVAIAWI) form a helical membrane-spanning segment. Over 163 to 176 (QHINEDAIKTLRNN) the chain is Extracellular. An N-linked (GlcNAc...) asparagine glycan is attached at N175. The helical transmembrane segment at 177-197 (SIVSVSMSFSAFLVLTLSGLL) threads the bilayer. Residues 198 to 208 (SGYKLCKRFMW) are Cytoplasmic-facing.

It belongs to the Casparian strip membrane proteins (CASP) family. Homodimer and heterodimers.

Its subcellular location is the cell membrane. The sequence is that of CASP-like protein 4A4 from Arabidopsis thaliana (Mouse-ear cress).